We begin with the raw amino-acid sequence, 310 residues long: GMP synthase [glutamine-hydrolyzing] subunit B (310 aa).

A GMPS ATP-PPase domain is found at 2–185; that stretch reads FDAKSFIEES…LGLPEKIAHR (184 aa). 29–35 contributes to the ATP binding site; that stretch reads SGGVDSS.

As to quaternary structure, heterodimer composed of a glutamine amidotransferase subunit (A) and a GMP-binding subunit (B).

It catalyses the reaction XMP + L-glutamine + ATP + H2O = GMP + L-glutamate + AMP + diphosphate + 2 H(+). The protein operates within purine metabolism; GMP biosynthesis; GMP from XMP (L-Gln route): step 1/1. Functionally, catalyzes the synthesis of GMP from XMP. The protein is GMP synthase [glutamine-hydrolyzing] subunit B of Methanococcus vannielii (strain ATCC 35089 / DSM 1224 / JCM 13029 / OCM 148 / SB).